Reading from the N-terminus, the 341-residue chain is MEPAFGEVNQLGGVFVNGRPLPNAIRLRIVELAQLGIRPCDISRQLRVSHGCVSKILARYNETGSILPGAIGGSKPRVTTPTVVKHIRTYKQRDPGIFAWEIRDRLLADGVCDKYNVPSVSSISRILRNKIGNLAQQGHYDSYKQHQPAPQPALPYNHIYSYPNPITAAAAKVPTPPGVPAIPGSVAMPRTWPSSHSVTDILGIRSITDQVSDSSPYHSPKVEEWSSLGRNNFPAAAPHAVNGLEKGTLEQETKYSQAPNGLPAVGSFVSASSMAPYPTPAQVSPYMTYSAAPSGYVAGHGWQHAGSTPLSPHNCDIPASLAFKGMQAVREGSHSVTASAL.

A DNA-binding region (paired) is located at residues 4-130 (AFGEVNQLGG…SSISRILRNK (127 aa)). Positions 7-63 (EVNQLGGVFVNGRPLPNAIRLRIVELAQLGIRPCDISRQLRVSHGCVSKILARYNET) are PAI subdomain. Positions 82–130 (TVVKHIRTYKQRDPGIFAWEIRDRLLADGVCDKYNVPSVSSISRILRNK) are RED subdomain. Positions 168-189 (AAAAKVPTPPGVPAIPGSVAMP) are interaction with KDM5B.

As to quaternary structure, interacts with KDM5B.

The protein resides in the nucleus. Its function is as follows. Transcription factor required for normal development of thymus, parathyroid glands, ultimobranchial bodies, teeth, skeletal elements of skull and larynx as well as distal limbs. In Callimico goeldii (Goeldi's marmoset), this protein is Paired box protein Pax-9 (PAX9).